The following is a 494-amino-acid chain: Alpha-amylase-related protein (494 aa).

The N-terminal stretch at 1–20 (MFKFALALTLCLAGASLSLA) is a signal peptide. At Gln-21 the chain carries Pyrrolidone carboxylic acid. A disulfide bridge links Cys-48 with Cys-104. Ca(2+) contacts are provided by Asn-118, Gln-169, and Asp-178. Cysteines 157 and 171 form a disulfide. Residue Arg-206 participates in chloride binding. Asp-208 serves as the catalytic Nucleophile. Ca(2+) is bound at residue His-212. Catalysis depends on Glu-245, which acts as the Proton donor. Residues Asn-308 and Arg-343 each coordinate chloride. Disulfide bonds link Cys-376–Cys-382, Cys-418–Cys-441, and Cys-448–Cys-460.

Belongs to the glycosyl hydrolase 13 family. Monomer. Ca(2+) is required as a cofactor. Requires chloride as cofactor.

Its subcellular location is the secreted. It carries out the reaction Endohydrolysis of (1-&gt;4)-alpha-D-glucosidic linkages in polysaccharides containing three or more (1-&gt;4)-alpha-linked D-glucose units.. The sequence is that of Alpha-amylase-related protein (Amyrel) from Drosophila dossoui (Fruit fly).